The primary structure comprises 318 residues: Porphobilinogen deaminase (318 aa).

Position 241 is an S-(dipyrrolylmethanemethyl)cysteine (Cys-241).

Belongs to the HMBS family. Monomer. Requires dipyrromethane as cofactor.

The enzyme catalyses 4 porphobilinogen + H2O = hydroxymethylbilane + 4 NH4(+). Its pathway is porphyrin-containing compound metabolism; protoporphyrin-IX biosynthesis; coproporphyrinogen-III from 5-aminolevulinate: step 2/4. Functionally, tetrapolymerization of the monopyrrole PBG into the hydroxymethylbilane pre-uroporphyrinogen in several discrete steps. In Citrifermentans bemidjiense (strain ATCC BAA-1014 / DSM 16622 / JCM 12645 / Bem) (Geobacter bemidjiensis), this protein is Porphobilinogen deaminase.